Here is a 408-residue protein sequence, read N- to C-terminus: Na(+)/H(+) antiporter NhaA 2 (408 aa).

Helical transmembrane passes span Gly-36 to Val-56, Ile-79 to Ile-99, Ala-115 to Phe-135, Gly-145 to Gly-165, Ile-174 to Phe-194, Ser-197 to Phe-217, Leu-225 to His-245, Phe-281 to Leu-301, Leu-310 to Leu-330, Val-348 to Leu-368, and Phe-381 to Tyr-401.

Belongs to the NhaA Na(+)/H(+) (TC 2.A.33) antiporter family.

It is found in the cell inner membrane. It carries out the reaction Na(+)(in) + 2 H(+)(out) = Na(+)(out) + 2 H(+)(in). In terms of biological role, na(+)/H(+) antiporter that extrudes sodium in exchange for external protons. The chain is Na(+)/H(+) antiporter NhaA 2 from Flavobacterium johnsoniae (strain ATCC 17061 / DSM 2064 / JCM 8514 / BCRC 14874 / CCUG 350202 / NBRC 14942 / NCIMB 11054 / UW101) (Cytophaga johnsonae).